The primary structure comprises 245 residues: Phosducin (245 aa).

The interval 1-70 (MEKAKSQSLE…DKDSKERFSR (70 aa)) is disordered. In terms of domain architecture, Phosducin spans 1–244 (MEKAKSQSLE…LEQTNMEEDM (244 aa)). Basic and acidic residues-rich tracts occupy residues 28 to 50 (DWRK…KEIL) and 58 to 69 (SRDDKDSKERFS). S73 carries the phosphoserine; by PKA modification. Residues 111 to 245 (YGFVYELESG…EQTNMEEDME (135 aa)) form a thioredoxin fold region.

It belongs to the phosducin family. In terms of assembly, interacts with CRX. Forms a complex with the beta and gamma subunits of the GTP-binding protein, transducin. Light-induced changes in cyclic nucleotide levels modulate the phosphorylation of this protein by cAMP kinase.

The protein resides in the cytoplasm. It is found in the cytosol. Its subcellular location is the nucleus. It localises to the cell projection. The protein localises to the cilium. The protein resides in the photoreceptor outer segment. It is found in the photoreceptor inner segment. Inhibits the transcriptional activation activity of the cone-rod homeobox CRX. May participate in the regulation of visual phototransduction or in the integration of photoreceptor metabolism. In Bos taurus (Bovine), this protein is Phosducin (PDC).